We begin with the raw amino-acid sequence, 445 residues long: Phosphoglucosamine mutase (445 aa).

The active-site Phosphoserine intermediate is serine 99. Mg(2+)-binding residues include serine 99, aspartate 242, aspartate 244, and aspartate 246. Serine 99 is subject to Phosphoserine.

It belongs to the phosphohexose mutase family. It depends on Mg(2+) as a cofactor. In terms of processing, activated by phosphorylation.

The catalysed reaction is alpha-D-glucosamine 1-phosphate = D-glucosamine 6-phosphate. In terms of biological role, catalyzes the conversion of glucosamine-6-phosphate to glucosamine-1-phosphate. The chain is Phosphoglucosamine mutase from Campylobacter jejuni (strain RM1221).